Here is a 225-residue protein sequence, read N- to C-terminus: MAGKLDRLQRSLGHRFDNPALLEQALTHRSFGQPNNERLEFLGDSILNCVVAIALFERFASLREGEMSRLRASLVCQDGLHRVALELDLGEYLRLGEGEMKSGGFRRPSILADALEAVFAATFLDQGFAAAKAVIDRLYDPMIAAIDPGVAAKDPKTALQELLQGRKLPLPTYVMAKVHGEAHAQEFEVVCEVNALNLRTTGRGTNRRAAEQQAAELALAQLRKP.

The RNase III domain occupies 5–127 (LDRLQRSLGH…VFAATFLDQG (123 aa)). Mg(2+) is bound at residue Glu-40. Residue Asp-44 is part of the active site. 2 residues coordinate Mg(2+): Asp-113 and Glu-116. Glu-116 is a catalytic residue. Positions 154–224 (DPKTALQELL…AELALAQLRK (71 aa)) constitute a DRBM domain.

Belongs to the ribonuclease III family. As to quaternary structure, homodimer. Mg(2+) is required as a cofactor.

Its subcellular location is the cytoplasm. It carries out the reaction Endonucleolytic cleavage to 5'-phosphomonoester.. Digests double-stranded RNA. Involved in the processing of primary rRNA transcript to yield the immediate precursors to the large and small rRNAs (23S and 16S). Processes some mRNAs, and tRNAs when they are encoded in the rRNA operon. Processes pre-crRNA and tracrRNA of type II CRISPR loci if present in the organism. This is Ribonuclease 3 from Aromatoleum aromaticum (strain DSM 19018 / LMG 30748 / EbN1) (Azoarcus sp. (strain EbN1)).